The chain runs to 279 residues: Non-structural maintenance of chromosomes element 3 homolog (279 aa).

The disordered stretch occupies residues methionine 1 to glycine 52. Residues serine 30–alanine 48 show a composition bias toward low complexity. Residue serine 38 is modified to Phosphoserine. The interval glycine 52–serine 279 is interaction with NSMCE1. The MAGE domain maps to leucine 59 to alanine 259.

As to quaternary structure, component of the SMC5-SMC6 complex which consists at least of SMC5, SMC6, NSMCE2, NSMCE1, NSMCE4A or EID3 and NSMCE3. NSMCE1, NSMCE4A or EID3 and NSMCE3 probably form a subcomplex that bridges the head domains of the SMC5:SMC6 heterodimer. Interacts with PJA1. Interacts with E2F1 (via C-terminus). Interacts with NGFR (via C-terminus). Interacts with NSMCE1. Interacts with NSMCE4. Interacts with SMC6. Interacts with EID3. In terms of tissue distribution, ubiquitous.

The protein resides in the cytoplasm. It is found in the nucleus. The protein localises to the chromosome. Its subcellular location is the telomere. Its function is as follows. Component of the SMC5-SMC6 complex, a complex involved in repair of DNA double-strand breaks by homologous recombination. The complex may promote sister chromatid homologous recombination by recruiting the SMC1-SMC3 cohesin complex to double-strand breaks. The complex is required for telomere maintenance via recombination in ALT (alternative lengthening of telomeres) cell lines and mediates sumoylation of shelterin complex (telosome) components which is proposed to lead to shelterin complex disassembly in ALT-associated PML bodies (APBs). In vitro enhances ubiquitin ligase activity of NSMCE1. Proposed to act through recruitment and/or stabilization of the Ubl-conjugating enzyme (E2) at the E3:substrate complex. May be a growth suppressor that facilitates the entry of the cell into cell cycle arrest. The polypeptide is Non-structural maintenance of chromosomes element 3 homolog (Nsmce3) (Mus musculus (Mouse)).